Consider the following 134-residue polypeptide: Large ribosomal subunit protein eL28 (134 aa).

S60 carries the phosphoserine modification.

The protein belongs to the eukaryotic ribosomal protein eL28 family. In terms of assembly, component of the large ribosomal subunit (LSU). Mature yeast ribosomes consist of a small (40S) and a large (60S) subunit. The 40S small subunit contains 1 molecule of ribosomal RNA (18S rRNA) and at least 33 different proteins. The large 60S subunit contains 3 rRNA molecules (25S, 5.8S and 5S rRNA) and at least 46 different proteins.

It is found in the cytoplasm. Component of the ribosome, a large ribonucleoprotein complex responsible for the synthesis of proteins in the cell. The small ribosomal subunit (SSU) binds messenger RNAs (mRNAs) and translates the encoded message by selecting cognate aminoacyl-transfer RNA (tRNA) molecules. The large subunit (LSU) contains the ribosomal catalytic site termed the peptidyl transferase center (PTC), which catalyzes the formation of peptide bonds, thereby polymerizing the amino acids delivered by tRNAs into a polypeptide chain. The nascent polypeptides leave the ribosome through a tunnel in the LSU and interact with protein factors that function in enzymatic processing, targeting, and the membrane insertion of nascent chains at the exit of the ribosomal tunnel. This chain is Large ribosomal subunit protein eL28 (rpl44), found in Schizosaccharomyces pombe (strain 972 / ATCC 24843) (Fission yeast).